Reading from the N-terminus, the 368-residue chain is Cyanide hydratase (368 aa).

In terms of domain architecture, CN hydrolase spans 6–285; sequence YKAAVVTSEP…DGLMYVDIDL (280 aa). The active-site Proton acceptor is the Glu46. Lys128 is a catalytic residue. Cys163 (nucleophile) is an active-site residue. A disordered region spans residues 341 to 368; the sequence is LDRPLEEEDYRQGTDAGETEKASSNGHA.

Belongs to the carbon-nitrogen hydrolase superfamily. Nitrilase family. In terms of assembly, oligomer of dimers, forming left-handed helical fibers.

The catalysed reaction is formamide = hydrogen cyanide + H2O. In terms of biological role, catalyzes the hydration of cyanide to formamide. Degradation of cyanide may be important for plant pathogenic fungi in infection of cyanogenic plants. The chain is Cyanide hydratase from Microdochium sorghi (Zonate leaf spot disease fungus).